Here is a 367-residue protein sequence, read N- to C-terminus: Ferrochelatase (367 aa).

His-226 and Glu-307 together coordinate Fe cation.

This sequence belongs to the ferrochelatase family.

The protein localises to the cytoplasm. It carries out the reaction heme b + 2 H(+) = protoporphyrin IX + Fe(2+). Its pathway is porphyrin-containing compound metabolism; protoheme biosynthesis; protoheme from protoporphyrin-IX: step 1/1. Functionally, catalyzes the ferrous insertion into protoporphyrin IX. This chain is Ferrochelatase, found in Burkholderia pseudomallei (strain 668).